A 130-amino-acid polypeptide reads, in one-letter code: General stress protein 13 (130 aa).

Residues 8 to 77 enclose the S1 motif domain; sequence GSVYTGKVTG…EKGKISLSIR (70 aa). The tract at residues 76–109 is disordered; that stretch reads IRATQAAPEKKESKPRKPKAAQVSEEASTPQGFN. The segment covering 100-109 has biased composition (polar residues); the sequence is EEASTPQGFN.

Found in association with the 30S subunit of the ribosome.

It is found in the cytoplasm. The polypeptide is General stress protein 13 (yugI) (Bacillus subtilis (strain 168)).